The primary structure comprises 309 residues: Tagatose-6-phosphate kinase (309 aa).

This sequence belongs to the carbohydrate kinase PfkB family. LacC subfamily.

It catalyses the reaction D-tagatofuranose 6-phosphate + ATP = D-tagatofuranose 1,6-bisphosphate + ADP + H(+). It functions in the pathway carbohydrate metabolism; D-tagatose 6-phosphate degradation; D-glyceraldehyde 3-phosphate and glycerone phosphate from D-tagatose 6-phosphate: step 1/2. The chain is Tagatose-6-phosphate kinase from Streptococcus pneumoniae (strain Taiwan19F-14).